The following is a 194-amino-acid chain: Large ribosomal subunit protein bL25 (194 aa).

Belongs to the bacterial ribosomal protein bL25 family. CTC subfamily. As to quaternary structure, part of the 50S ribosomal subunit; part of the 5S rRNA/L5/L18/L25 subcomplex. Contacts the 5S rRNA. Binds to the 5S rRNA independently of L5 and L18.

In terms of biological role, this is one of the proteins that binds to the 5S RNA in the ribosome where it forms part of the central protuberance. The polypeptide is Large ribosomal subunit protein bL25 (Parabacteroides distasonis (strain ATCC 8503 / DSM 20701 / CIP 104284 / JCM 5825 / NCTC 11152)).